The sequence spans 441 residues: Zinc finger protein ZIC 3 (441 aa).

The segment at 222 to 257 adopts a C2H2-type 1; atypical zinc-finger fold; that stretch reads LSCKWLEESTMNHPQKTCDRTFSSMHELVTHMTMEH. The segment at 266 to 293 adopts a C2H2-type 2; atypical zinc-finger fold; sequence HICYWEECPRGGKSFKAKYKLVNHIRVH. 3 C2H2-type zinc fingers span residues 299-323, 329-353, and 359-381; these read FPCP…KRTH, FKCE…MHVH, and YICK…MKVH. The segment at 375 to 441 is disordered; the sequence is RKHMKVHESQ…LPPNFNEWYV (67 aa). Over residues 383 to 399 the composition is skewed to low complexity; that stretch reads SQGSDSSPAASSGYESA. Positions 406–429 are enriched in polar residues; sequence SANSEEPSKNSSATHQTNNNSHNT.

This sequence belongs to the GLI C2H2-type zinc-finger protein family. First detected at early gastrula (stage 10.25) in the dorsal lip and prospective neural plate. Also expressed in the mesoderm at early gastrulation, with expression strongest on the dorsal side. Mesodermal expression continues at stage 12 but is hardly detectable after stage 14. As gastrulation proceeds, expression decreases in the dorsal lip and increases in the prospective neural plate. At the neural plate stage (stage 14), expressed strongly in the prospective mesencephalon and anterior rhombencephalon, after which expression becomes stronger in the anterior neural folds. At early tailbud stage (stage 20), expression becomes restricted to the dorsal region of forebrain, midbrain and hindbrain, and weakly to the dorsal trunk. After mid-tailbud stage, expression decreases in the diencephalon, appears in the lateral mesoderm of the tailbud region and becomes restricted in the dorsal part of the neural tube.

The protein resides in the nucleus. Its subcellular location is the cytoplasm. Its function is as follows. Probably acts as a transcriptional activator. May bind to the minimal GLI-consensus sequence 5'-GGGTGGTC-3'. Can determine the ectodermal cell fate and promote the earliest step of neural and neural crest development. Involved in establishing left-right asymmetry in the embryo. This Xenopus laevis (African clawed frog) protein is Zinc finger protein ZIC 3 (zic3).